A 615-amino-acid chain; its full sequence is Alpha-terpinene synthase TPS33PK, chloroplastic (615 aa).

A chloroplast-targeting transit peptide spans 1 to 33; the sequence is MFCRLGVHQFSPLSLILNTTKLARASTLSSACY. (2E)-geranyl diphosphate is bound by residues E334, V371, L375, L513, and S516. Mg(2+)-binding residues include V371 and L375. The DDXXD motif motif lies at 371–375; that stretch reads VYGTL. Mg(2+)-binding residues include S516, M520, and D524.

Belongs to the terpene synthase family. Tpsb subfamily. Requires Mg(2+) as cofactor. The cofactor is Mn(2+).

It is found in the plastid. Its subcellular location is the chloroplast. It carries out the reaction (2E)-geranyl diphosphate = alpha-terpinene + diphosphate. The enzyme catalyses (2E)-geranyl diphosphate = gamma-terpinene + diphosphate. It functions in the pathway secondary metabolite biosynthesis; terpenoid biosynthesis. In terms of biological role, involved in monoterpene (C10) olefins biosynthesis, constituants of cannabinoids and terpenoids-rich resins. Catalyzes mainly the conversion of (2E)-geranyl diphosphate to alpha-terpinene and gamma-terpinene. The polypeptide is Alpha-terpinene synthase TPS33PK, chloroplastic (Cannabis sativa (Hemp)).